A 442-amino-acid chain; its full sequence is Decapping and exoribonuclease protein 1 (442 aa).

The span at 31–40 shows a compositional bias: basic and acidic residues; sequence QSKLCKEKTT. The segment at 31 to 56 is disordered; sequence QSKLCKEKTTSDSSSSRKPSQQRDNY. Low complexity predominate over residues 41-53; that stretch reads SDSSSSRKPSQQR. A substrate-binding site is contributed by Arg-101. An a divalent metal cation-binding site is contributed by Glu-255. Glu-293 serves as a coordination point for substrate. A divalent metal cation contacts are provided by Asp-295, Glu-306, and Leu-307. The substrate site is built by Lys-308 and Gln-330.

Belongs to the DXO/Dom3Z family. The cofactor is a divalent metal cation.

It localises to the cytoplasm. It catalyses the reaction a 5'-end NAD(+)-phospho-ribonucleoside in mRNA + H2O = a 5'-end phospho-ribonucleoside in mRNA + NAD(+) + H(+). The enzyme catalyses a 5'-end (N(7)-methyl 5'-triphosphoguanosine)-ribonucleoside-ribonucleotide in mRNA + H2O = a (N(7)-methyl 5'-triphosphoguanosine)-nucleoside + a 5'-end phospho-ribonucleoside in mRNA + H(+). Decapping enzyme for NAD-capped RNAs: specifically hydrolyzes the nicotinamide adenine dinucleotide (NAD) cap from a subset of RNAs by removing the entire NAD moiety from the 5'-end of an NAD-capped RNA. The NAD-cap is present at the 5'-end of some RNAs and snoRNAs. In contrast to the canonical 5'-end N7 methylguanosine (m7G) cap, the NAD cap promotes mRNA decay. Also acts as a non-canonical decapping enzyme that removes the entire cap structure of m7G capped or incompletely capped RNAs. Has decapping activity toward incomplete 5'-end m7G cap mRNAs such as unmethylated 5'-end-capped RNA (cap0), while it has no activity toward 2'-O-ribose methylated m7G cap (cap1). Also has 5'-3' exonuclease activity. The protein is Decapping and exoribonuclease protein 1 (DXO1) of Saccharomyces cerevisiae (strain ATCC 204508 / S288c) (Baker's yeast).